The chain runs to 487 residues: Glutamyl-tRNA(Gln) amidotransferase subunit A (487 aa).

Residues Lys-79 and Ser-154 each act as charge relay system in the active site. Catalysis depends on Ser-178, which acts as the Acyl-ester intermediate.

It belongs to the amidase family. GatA subfamily. Heterotrimer of A, B and C subunits.

The catalysed reaction is L-glutamyl-tRNA(Gln) + L-glutamine + ATP + H2O = L-glutaminyl-tRNA(Gln) + L-glutamate + ADP + phosphate + H(+). Allows the formation of correctly charged Gln-tRNA(Gln) through the transamidation of misacylated Glu-tRNA(Gln) in organisms which lack glutaminyl-tRNA synthetase. The reaction takes place in the presence of glutamine and ATP through an activated gamma-phospho-Glu-tRNA(Gln). This Moorella thermoacetica (strain ATCC 39073 / JCM 9320) protein is Glutamyl-tRNA(Gln) amidotransferase subunit A.